A 633-amino-acid chain; its full sequence is Chaperone protein dnaK2 (633 aa).

At Thr196 the chain carries Phosphothreonine; by autocatalysis. A disordered region spans residues 600–633 (ATADGGPAQHAATGGPTSGGGGGDDVIDAEFDKG). A compositionally biased stretch (acidic residues) spans 624 to 633 (DVIDAEFDKG).

It belongs to the heat shock protein 70 family.

In terms of biological role, acts as a chaperone. The polypeptide is Chaperone protein dnaK2 (dnaK2) (Streptomyces avermitilis (strain ATCC 31267 / DSM 46492 / JCM 5070 / NBRC 14893 / NCIMB 12804 / NRRL 8165 / MA-4680)).